The sequence spans 435 residues: 3-phosphoshikimate 1-carboxyvinyltransferase (435 aa).

The 3-phosphoshikimate site is built by K15, S16, and R20. Residue K15 participates in phosphoenolpyruvate binding. G96 and R124 together coordinate phosphoenolpyruvate. Residues S169, Q171, S195, D319, and K346 each contribute to the 3-phosphoshikimate site. Q171 serves as a coordination point for phosphoenolpyruvate. D319 (proton acceptor) is an active-site residue. Residues R350 and R395 each contribute to the phosphoenolpyruvate site.

This sequence belongs to the EPSP synthase family. In terms of assembly, monomer.

The protein resides in the cytoplasm. The enzyme catalyses 3-phosphoshikimate + phosphoenolpyruvate = 5-O-(1-carboxyvinyl)-3-phosphoshikimate + phosphate. The protein operates within metabolic intermediate biosynthesis; chorismate biosynthesis; chorismate from D-erythrose 4-phosphate and phosphoenolpyruvate: step 6/7. Functionally, catalyzes the transfer of the enolpyruvyl moiety of phosphoenolpyruvate (PEP) to the 5-hydroxyl of shikimate-3-phosphate (S3P) to produce enolpyruvyl shikimate-3-phosphate and inorganic phosphate. This is 3-phosphoshikimate 1-carboxyvinyltransferase from Chlorobium phaeobacteroides (strain BS1).